Consider the following 208-residue polypeptide: Pyrrolidone-carboxylate peptidase (208 aa).

Catalysis depends on residues Glu-79, Cys-142, and His-166.

Belongs to the peptidase C15 family. In terms of assembly, homotetramer made of two disulfide-linked dimers.

The protein localises to the cytoplasm. The catalysed reaction is Release of an N-terminal pyroglutamyl group from a polypeptide, the second amino acid generally not being Pro.. In terms of biological role, removes 5-oxoproline from various penultimate amino acid residues except L-proline. In Pyrococcus furiosus (strain ATCC 43587 / DSM 3638 / JCM 8422 / Vc1), this protein is Pyrrolidone-carboxylate peptidase (pcp).